The following is a 602-amino-acid chain: Elongation factor 4 (602 aa).

A tr-type G domain is found at 7-188; it reads ENIRNFSIIA…SIIRLVPPPK (182 aa). Residues 19–24 and 135–138 each bind GTP; these read DHGKST and NKID.

It belongs to the TRAFAC class translation factor GTPase superfamily. Classic translation factor GTPase family. LepA subfamily.

The protein localises to the cell inner membrane. It carries out the reaction GTP + H2O = GDP + phosphate + H(+). In terms of biological role, required for accurate and efficient protein synthesis under certain stress conditions. May act as a fidelity factor of the translation reaction, by catalyzing a one-codon backward translocation of tRNAs on improperly translocated ribosomes. Back-translocation proceeds from a post-translocation (POST) complex to a pre-translocation (PRE) complex, thus giving elongation factor G a second chance to translocate the tRNAs correctly. Binds to ribosomes in a GTP-dependent manner. The protein is Elongation factor 4 of Chlamydia muridarum (strain MoPn / Nigg).